Consider the following 170-residue polypeptide: Ribosome maturation factor RimP (170 aa).

Belongs to the RimP family.

The protein resides in the cytoplasm. Its function is as follows. Required for maturation of 30S ribosomal subunits. The sequence is that of Ribosome maturation factor RimP from Chlorobaculum parvum (strain DSM 263 / NCIMB 8327) (Chlorobium vibrioforme subsp. thiosulfatophilum).